Here is a 90-residue protein sequence, read N- to C-terminus: MSDAAVPPKKASPKKAAAKKASPKKAAAKKASPKKAAARKTAAKKTAKKPAVRKPAAKKRAAPKKKPAAAKKPAAKKAPKKAVKKAPKKK.

The interval 1-90 (MSDAAVPPKK…KAVKKAPKKK (90 aa)) is disordered. The segment covering 11 to 90 (ASPKKAAAKK…KAVKKAPKKK (80 aa)) has biased composition (basic residues).

Its subcellular location is the nucleus. The protein resides in the chromosome. The chain is Histone H1.M6.2 from Trypanosoma cruzi.